A 741-amino-acid polypeptide reads, in one-letter code: Phosphoribosylformylglycinamidine synthase subunit PurL (741 aa).

His-54 is a catalytic residue. Residues Tyr-57 and Lys-96 each contribute to the ATP site. Position 98 (Glu-98) interacts with Mg(2+). Substrate is bound by residues 99–102 and Arg-121; that span reads SHNH. His-100 serves as the catalytic Proton acceptor. Mg(2+) is bound at residue Asp-122. Gln-245 contacts substrate. Asp-273 provides a ligand contact to Mg(2+). 317–319 contributes to the substrate binding site; it reads ESQ. Positions 500 and 537 each coordinate ATP. Mg(2+) is bound at residue Asn-538. Ser-540 serves as a coordination point for substrate.

Belongs to the FGAMS family. As to quaternary structure, monomer. Part of the FGAM synthase complex composed of 1 PurL, 1 PurQ and 2 PurS subunits.

The protein resides in the cytoplasm. It catalyses the reaction N(2)-formyl-N(1)-(5-phospho-beta-D-ribosyl)glycinamide + L-glutamine + ATP + H2O = 2-formamido-N(1)-(5-O-phospho-beta-D-ribosyl)acetamidine + L-glutamate + ADP + phosphate + H(+). The protein operates within purine metabolism; IMP biosynthesis via de novo pathway; 5-amino-1-(5-phospho-D-ribosyl)imidazole from N(2)-formyl-N(1)-(5-phospho-D-ribosyl)glycinamide: step 1/2. Part of the phosphoribosylformylglycinamidine synthase complex involved in the purines biosynthetic pathway. Catalyzes the ATP-dependent conversion of formylglycinamide ribonucleotide (FGAR) and glutamine to yield formylglycinamidine ribonucleotide (FGAM) and glutamate. The FGAM synthase complex is composed of three subunits. PurQ produces an ammonia molecule by converting glutamine to glutamate. PurL transfers the ammonia molecule to FGAR to form FGAM in an ATP-dependent manner. PurS interacts with PurQ and PurL and is thought to assist in the transfer of the ammonia molecule from PurQ to PurL. This Shouchella clausii (strain KSM-K16) (Alkalihalobacillus clausii) protein is Phosphoribosylformylglycinamidine synthase subunit PurL.